The primary structure comprises 464 residues: UDP-N-acetylmuramate--L-alanine ligase (464 aa).

118 to 124 (GTHGKTT) serves as a coordination point for ATP.

The protein belongs to the MurCDEF family.

The protein localises to the cytoplasm. The enzyme catalyses UDP-N-acetyl-alpha-D-muramate + L-alanine + ATP = UDP-N-acetyl-alpha-D-muramoyl-L-alanine + ADP + phosphate + H(+). It functions in the pathway cell wall biogenesis; peptidoglycan biosynthesis. Its function is as follows. Cell wall formation. This Dinoroseobacter shibae (strain DSM 16493 / NCIMB 14021 / DFL 12) protein is UDP-N-acetylmuramate--L-alanine ligase.